Reading from the N-terminus, the 29-residue chain is Cyclotide mela-1 (29 aa).

Residues 1–29 (GKYTCGETCFKGKCYTPGCTCSYPICKKD) constitute a cross-link (cyclopeptide (Gly-Asp)). Cystine bridges form between cysteine 5–cysteine 19, cysteine 9–cysteine 21, and cysteine 14–cysteine 26.

In terms of processing, this is a cyclic peptide. Post-translationally, contains 3 disulfide bonds.

Functionally, probably participates in a plant defense mechanism (Potential). Binds to and induces leakage in phospholipd membranes, particularly ones containing 1-palmitoyl-2-oleophosphatidylethanolamine (POPE). In vitro, displays cytotoxicity against cultured cells but no hemolytic activity towards fresh erythrocytes. Not active against Gram-negative bacterium E.coli ATCC 25922 or Gram-positive bacterium S.aureus ATCC 25923 up to a concentration of 64 uM. This is Cyclotide mela-1 from Melicytus latifolius (Norfolk Island mahoe).